The sequence spans 836 residues: Tuftelin-interacting protein 11 (836 aa).

The segment covering 1-13 (MSLSHLYRDGEGH) has biased composition (basic and acidic residues). Disordered stretches follow at residues 1–31 (MSLS…DWDL), 54–73 (WAER…RARD), and 85–136 (LKKG…AGGT). The interval 1–50 (MSLSHLYRDGEGHMDDDEDERENFEITDWDLQNEFNPNRQRHWQTKEEAT) is required for interaction with DHX15. Position 2 is a phosphoserine (Ser2). Acidic residues predominate over residues 14–28 (MDDDEDERENFEITD). A compositionally biased stretch (basic and acidic residues) spans 54-64 (WAERDSDEERP). 2 positions are modified to phosphoserine: Ser59 and Ser98. Over residues 91–102 (EEAELEDSDDEE) the composition is skewed to acidic residues. Basic and acidic residues predominate over residues 103–116 (KPVKQDEFPKDFGP). Phosphoserine is present on Ser144. The 47-residue stretch at 149-195 (TKGIGQKLLQKMGYVPGRGLGKNAQGIINPIEAKQRKGKGAVGAYGS) folds into the G-patch domain. The interval 183-236 (QRKGKGAVGAYGSERTTQSLQDFPVVDSEEEAEEEFQKELSQWRKDPSGSKKKP) is disordered. Ser210 carries the post-translational modification Phosphoserine. Over residues 217-231 (EFQKELSQWRKDPSG) the composition is skewed to basic and acidic residues. Residues 699–704 (VKDKFN) carry the Nuclear localization signal motif. The interval 709 to 733 (IMNRAVSSNVGAYMQPGARENIAYL) is required for nuclear speckle localization.

This sequence belongs to the TFP11/STIP family. Identified in the spliceosome C complex. Found in the Intron Large (IL) complex, a post-mRNA release spliceosomal complex containing the excised intron, U2, U5 and U6 snRNPs, and splicing factors. Interacts with TUFT1. Interacts with DHX15; indicative for a recruitment of DHX15 to the IL complex. Interacts with GCFC2.

The protein localises to the cytoplasm. It is found in the nucleus. Functionally, involved in pre-mRNA splicing, specifically in spliceosome disassembly during late-stage splicing events. Intron turnover seems to proceed through reactions in two lariat-intron associated complexes termed Intron Large (IL) and Intron Small (IS). In cooperation with DHX15 seems to mediate the transition of the U2, U5 and U6 snRNP-containing IL complex to the snRNP-free IS complex leading to efficient debranching and turnover of excised introns. May play a role in the differentiation of ameloblasts and odontoblasts or in the forming of the enamel extracellular matrix. The chain is Tuftelin-interacting protein 11 (TFIP11) from Sus scrofa (Pig).